Here is a 364-residue protein sequence, read N- to C-terminus: Spermidine/putrescine import ATP-binding protein PotA (364 aa).

One can recognise an ABC transporter domain in the interval 5 to 235 (LSLKSVSKSY…PVNRFVADFI (231 aa)). 37-44 (GPSGCGKT) lines the ATP pocket.

Belongs to the ABC transporter superfamily. Spermidine/putrescine importer (TC 3.A.1.11.1) family. As to quaternary structure, the complex is composed of two ATP-binding proteins (PotA), two transmembrane proteins (PotB and PotC) and a solute-binding protein (PotD).

The protein localises to the cell membrane. The catalysed reaction is ATP + H2O + polyamine-[polyamine-binding protein]Side 1 = ADP + phosphate + polyamineSide 2 + [polyamine-binding protein]Side 1.. Its function is as follows. Part of the ABC transporter complex PotABCD involved in spermidine/putrescine import. Responsible for energy coupling to the transport system. The sequence is that of Spermidine/putrescine import ATP-binding protein PotA from Staphylococcus aureus (strain USA300).